Reading from the N-terminus, the 296-residue chain is Large ribosomal subunit protein uL15m (296 aa).

Residues 1-21 constitute a mitochondrion transit peptide; it reads MAGPLQGGGARALDLLRGLPR. Residues 22–66 are disordered; it reads VSLANLKPNPGSKKPERRPRGRRRGRKCGRGHKGERQRGTRPRLG. Over residues 36 to 52 the composition is skewed to basic residues; that stretch reads PERRPRGRRRGRKCGRG.

The protein belongs to the universal ribosomal protein uL15 family. In terms of assembly, component of the mitochondrial large ribosomal subunit (mt-LSU). Mature mammalian 55S mitochondrial ribosomes consist of a small (28S) and a large (39S) subunit. The 28S small subunit contains a 12S ribosomal RNA (12S mt-rRNA) and 30 different proteins. The 39S large subunit contains a 16S rRNA (16S mt-rRNA), a copy of mitochondrial valine transfer RNA (mt-tRNA(Val)), which plays an integral structural role, and 52 different proteins.

Its subcellular location is the mitochondrion. The protein is Large ribosomal subunit protein uL15m (MRPL15) of Homo sapiens (Human).